The following is a 489-amino-acid chain: N-succinylglutamate 5-semialdehyde dehydrogenase (489 aa).

216-221 (GSAATG) contributes to the NAD(+) binding site. Residues Glu-239 and Cys-273 contribute to the active site.

The protein belongs to the aldehyde dehydrogenase family. AstD subfamily.

It catalyses the reaction N-succinyl-L-glutamate 5-semialdehyde + NAD(+) + H2O = N-succinyl-L-glutamate + NADH + 2 H(+). The protein operates within amino-acid degradation; L-arginine degradation via AST pathway; L-glutamate and succinate from L-arginine: step 4/5. Catalyzes the NAD-dependent reduction of succinylglutamate semialdehyde into succinylglutamate. The protein is N-succinylglutamate 5-semialdehyde dehydrogenase of Erwinia tasmaniensis (strain DSM 17950 / CFBP 7177 / CIP 109463 / NCPPB 4357 / Et1/99).